Here is a 156-residue protein sequence, read N- to C-terminus: Calglandulin (156 aa).

EF-hand domains are found at residues 8–43 (EQIT…IGIN), 44–79 (PTKR…YHEK), 82–117 (NQDE…AGEP), and 118–153 (LNEH…ESFK). 5 residues coordinate Ca(2+): Asp131, Asp133, Asp135, Thr137, and Glu142.

The protein belongs to the calmodulin family. Calglandulin subfamily. In terms of tissue distribution, expressed by the venom gland.

It localises to the cytoplasm. In terms of biological role, may be involved in the cellular control mechanism of the secretion of toxins from the gland into the venom. In Tropidechis carinatus (Australian rough-scaled snake), this protein is Calglandulin.